A 309-amino-acid chain; its full sequence is Putative taste receptor type 2 member 33 (309 aa).

Position 1 (Met1) is a topological domain, extracellular. A helical transmembrane segment spans residues 2-22 (VYFLPIIFSILVVFAFVLGNF). Residues 23-46 (SNGFIALVNVIDWVKRQKISSADQ) lie on the Cytoplasmic side of the membrane. The helical transmembrane segment at 47 to 67 (ILTALVVSRVGLLWVILLHWY) threads the bilayer. Residues 68 to 86 (ANVFNSALYSLEVRIVASN) lie on the Extracellular side of the membrane. N-linked (GlcNAc...) asparagine glycosylation is present at Asn86. The chain crosses the membrane as a helical span at residues 87–107 (ISAVINHFSIWLAASLSIFYL). Residues 108-127 (LKIANFSNLIFLHLKKRIKS) are Cytoplasmic-facing. A helical membrane pass occupies residues 128–148 (VVLVILLGPLVFLICNLAVIT). Residues 149-181 (MDERVWTKEYEGNVTWKIKLRNAIHLSSLTVTT) are Extracellular-facing. Residue Asn161 is glycosylated (N-linked (GlcNAc...) asparagine). A helical membrane pass occupies residues 182-202 (LANLIPFTLSLICFLLLICSL). Topologically, residues 203-229 (CKHLKKMQLHSKGSQDPSTKVHIKALQ) are cytoplasmic. The helical transmembrane segment at 230–250 (TVISFLMLCAIYFLSIMISVW) threads the bilayer. Topologically, residues 251 to 259 (NLRSLENKP) are extracellular. A helical membrane pass occupies residues 260–280 (VFMFCKAIRFSYPSIHPFILI). Over 281 to 309 (WGNKKLKQTFLSVFWQVRYWVKGEKPSSP) the chain is Cytoplasmic.

This sequence belongs to the G-protein coupled receptor T2R family.

It localises to the membrane. Functionally, putative taste receptor which may play a role in the perception of bitterness. This Homo sapiens (Human) protein is Putative taste receptor type 2 member 33.